The following is a 395-amino-acid chain: Protein hedgehog (395 aa).

The N-terminal stretch at 1–26 (MDNHSSVPWASAASVTCLSLDAKCHS) is a signal peptide. The span at 26–43 (SSSSSCSSKSTASSISAS) shows a compositional bias: low complexity. The interval 26–46 (SSSSSCSSKSTASSISASPET) is disordered. Residues 27-82 (SSSSCSSKSTASSISASPETQTMRHIAHTQRCLSRLTSLVALLLIVLPMMFSPAHS) constitute a propeptide that is removed on maturation. C83 is lipidated: N-palmitoyl cysteine. Ca(2+) contacts are provided by E147, E148, D153, T183, E184, D187, and D189. G255 carries the Cholesterol glycine ester lipid modification.

It belongs to the hedgehog family. In terms of assembly, interacts with shf. Post-translationally, the C-terminal part of the hedgehog protein precursor displays an autoproteolysis activity that results in the cleavage of the full-length protein into two parts (N-product and C-product). In addition, the C-terminal part displays a cholesterol transferase activity that results by the covalent attachment of a cholesterol moiety to the C-terminal of the newly generated N-product. The N-product is the active species in both local and long-range signaling, whereas the C-product has no signaling activity. In terms of processing, cholesterylation is required for N-product targeting to lipid rafts and multimerization. N-palmitoylation by Rasp of the hedgehog N-product, within the secretory pathway, is required for the embryonic and larval patterning activities of the hedgehog signal.

Its subcellular location is the nucleus. The protein resides in the cytoplasm. It is found in the cell membrane. It catalyses the reaction glycyl-L-cysteinyl-[protein] + cholesterol + H(+) = [protein]-C-terminal glycyl cholesterol ester + N-terminal L-cysteinyl-[protein]. Its function is as follows. The C-terminal part of the hedgehog protein precursor displays an autoproteolysis activity that results in the cleavage of the full-length protein into two parts (N-product and C-product). In addition, the C-terminal part displays a cholesterol transferase activity that results by the covalent attachment of a cholesterol moiety to the C-terminal of the newly generated N-product. Once cleaved, the C-product has no signaling activity and diffuses from the cell. Functionally, the dually lipidated hedgehog protein N-product is a morphogen which is essential for a variety of patterning events during development. Establishes the anterior-posterior axis of the embryonic segments and patterns the larval imaginal disks. Binds to the patched (ptc) receptor, which functions in association with smoothened (smo), to activate the transcription of target genes wingless (wg), decapentaplegic (dpp) and ptc. In the absence of hh, ptc represses the constitutive signaling activity of smo through fused (fu). Essential component of a signaling pathway which regulates the Duox-dependent gut immune response to bacterial uracil; required to activate Cad99C-dependent endosome formation, norpA-dependent Ca2+ mobilization and p38 MAPK, which are essential steps in the Duox-dependent production of reactive oxygen species (ROS) in response to intestinal bacterial infection. During photoreceptor differentiation, it up-regulates transcription of Ubr3, which in turn promotes the hh-signaling pathway by mediating the ubiquitination and degradation of cos. The polypeptide is Protein hedgehog (Drosophila simulans (Fruit fly)).